Consider the following 149-residue polypeptide: General odorant-binding protein 57c (149 aa).

The signal sequence occupies residues 1-16; it reads MLKLWLICILTVSVVS. Disulfide bonds link cysteine 32/cysteine 70, cysteine 66/cysteine 117, and cysteine 106/cysteine 126.

Belongs to the PBP/GOBP family.

Its function is as follows. Present in the aqueous fluid surrounding olfactory sensory dendrites and are thought to aid in the capture and transport of hydrophobic odorants into and through this fluid. The protein is General odorant-binding protein 57c of Drosophila melanogaster (Fruit fly).